Reading from the N-terminus, the 349-residue chain is Cytoplasmic tRNA 2-thiolation protein 2 (349 aa).

It belongs to the CTU2/NCS2 family.

Its subcellular location is the cytoplasm. It functions in the pathway tRNA modification; 5-methoxycarbonylmethyl-2-thiouridine-tRNA biosynthesis. Plays a central role in 2-thiolation of mcm(5)S(2)U at tRNA wobble positions of tRNA(Lys), tRNA(Glu) and tRNA(Gln). May act by forming a heterodimer with tut-1/ctu-1 that ligates sulfur from thiocarboxylated urm-1 onto the uridine of tRNAs at wobble position. In Caenorhabditis briggsae, this protein is Cytoplasmic tRNA 2-thiolation protein 2.